Reading from the N-terminus, the 160-residue chain is Cytochrome b6-f complex subunit 4 (160 aa).

The next 3 helical transmembrane spans lie at 36–56 (LLYI…GLAV), 95–115 (LLGI…PFIE), and 128–148 (IAMS…IGAC).

It belongs to the cytochrome b family. PetD subfamily. In terms of assembly, the 4 large subunits of the cytochrome b6-f complex are cytochrome b6, subunit IV (17 kDa polypeptide, PetD), cytochrome f and the Rieske protein, while the 4 small subunits are PetG, PetL, PetM and PetN. The complex functions as a dimer.

The protein localises to the cellular thylakoid membrane. Its function is as follows. Component of the cytochrome b6-f complex, which mediates electron transfer between photosystem II (PSII) and photosystem I (PSI), cyclic electron flow around PSI, and state transitions. This chain is Cytochrome b6-f complex subunit 4, found in Prochlorococcus marinus (strain MIT 9301).